An 841-amino-acid chain; its full sequence is Protein translocase subunit SecA (841 aa).

ATP-binding positions include Gln85, 103-107 (GEGKT), and Asp492. The tract at residues 788 to 841 (EVVQGQTTAHQPQEGDEEKTVKKKPVRKVVDIGRNSPCHCGSGKKYKNCHGKTE) is disordered. 4 residues coordinate Zn(2+): Cys825, Cys827, Cys836, and His837. Residues 829 to 841 (SGKKYKNCHGKTE) are compositionally biased toward basic residues.

The protein belongs to the SecA family. Monomer and homodimer. Part of the essential Sec protein translocation apparatus which comprises SecA, SecYEG and auxiliary proteins SecDF. Other proteins may also be involved. Requires Zn(2+) as cofactor.

Its subcellular location is the cell membrane. It is found in the cytoplasm. It catalyses the reaction ATP + H2O + cellular proteinSide 1 = ADP + phosphate + cellular proteinSide 2.. In terms of biological role, part of the Sec protein translocase complex. Interacts with the SecYEG preprotein conducting channel. Has a central role in coupling the hydrolysis of ATP to the transfer of proteins into and across the cell membrane, serving as an ATP-driven molecular motor driving the stepwise translocation of polypeptide chains across the membrane. In Bacillus pumilus (strain SAFR-032), this protein is Protein translocase subunit SecA.